Reading from the N-terminus, the 134-residue chain is Large ribosomal subunit protein uL22 (134 aa).

Belongs to the universal ribosomal protein uL22 family. In terms of assembly, part of the 50S ribosomal subunit.

Its function is as follows. This protein binds specifically to 23S rRNA; its binding is stimulated by other ribosomal proteins, e.g. L4, L17, and L20. It is important during the early stages of 50S assembly. It makes multiple contacts with different domains of the 23S rRNA in the assembled 50S subunit and ribosome. The globular domain of the protein is located near the polypeptide exit tunnel on the outside of the subunit, while an extended beta-hairpin is found that lines the wall of the exit tunnel in the center of the 70S ribosome. The polypeptide is Large ribosomal subunit protein uL22 (Karelsulcia muelleri (strain GWSS) (Sulcia muelleri)).